The chain runs to 250 residues: Probable transcriptional regulatory protein Mkms_2298 (250 aa).

Belongs to the TACO1 family.

It is found in the cytoplasm. The sequence is that of Probable transcriptional regulatory protein Mkms_2298 from Mycobacterium sp. (strain KMS).